Consider the following 208-residue polypeptide: Imidazole glycerol phosphate synthase subunit HisH (208 aa).

The Glutamine amidotransferase type-1 domain occupies 1 to 206 (MIVIIDYDTG…KEVTESCKSS (206 aa)). The active-site Nucleophile is the cysteine 79. Residues histidine 181 and glutamate 183 contribute to the active site.

In terms of assembly, heterodimer of HisH and HisF.

It is found in the cytoplasm. It catalyses the reaction 5-[(5-phospho-1-deoxy-D-ribulos-1-ylimino)methylamino]-1-(5-phospho-beta-D-ribosyl)imidazole-4-carboxamide + L-glutamine = D-erythro-1-(imidazol-4-yl)glycerol 3-phosphate + 5-amino-1-(5-phospho-beta-D-ribosyl)imidazole-4-carboxamide + L-glutamate + H(+). The catalysed reaction is L-glutamine + H2O = L-glutamate + NH4(+). The protein operates within amino-acid biosynthesis; L-histidine biosynthesis; L-histidine from 5-phospho-alpha-D-ribose 1-diphosphate: step 5/9. IGPS catalyzes the conversion of PRFAR and glutamine to IGP, AICAR and glutamate. The HisH subunit catalyzes the hydrolysis of glutamine to glutamate and ammonia as part of the synthesis of IGP and AICAR. The resulting ammonia molecule is channeled to the active site of HisF. The sequence is that of Imidazole glycerol phosphate synthase subunit HisH from Listeria innocua serovar 6a (strain ATCC BAA-680 / CLIP 11262).